We begin with the raw amino-acid sequence, 96 residues long: Defensin-like protein 69 (96 aa).

An N-terminal signal peptide occupies residues 1 to 19; the sequence is MGSSKLLVAFTLIVMMTIS. Cystine bridges form between C37/C86, C41/C64, C50/C84, and C54/C85.

The protein belongs to the DEFL family.

It is found in the secreted. The sequence is that of Defensin-like protein 69 from Arabidopsis thaliana (Mouse-ear cress).